We begin with the raw amino-acid sequence, 173 residues long: CKLF-like MARVEL transmembrane domain-containing protein 8 (173 aa).

The region spanning 36-168 (FLRTLPGFLI…NTYFSFIAWR (133 aa)) is the MARVEL domain. Transmembrane regions (helical) follow at residues 40–60 (LPGF…TLIA), 70–90 (FGWV…FLII), 105–125 (TTVG…AAVV), and 147–167 (FFAF…FIAW).

Belongs to the chemokine-like factor family. In terms of tissue distribution, highly expressed in liver and pancreas.

The protein resides in the membrane. The protein localises to the cytoplasm. Its subcellular location is the nucleus. The polypeptide is CKLF-like MARVEL transmembrane domain-containing protein 8 (CMTM8) (Homo sapiens (Human)).